Here is a 312-residue protein sequence, read N- to C-terminus: Protoheme IX farnesyltransferase (312 aa).

9 helical membrane passes run 29–49 (VMSLVVFTGLVGLVLAPGHMN), 50–70 (PVLAVISILCIAVGAGASGAL), 90–110 (IPAGIIAPNQVLAFGLTLSAF), 117–137 (LMVNWLAAALLAFTIFFYAVI), 150–170 (IVIGGAAGAFPPMIGWAAATG), 177–197 (LVLFMIIFLWTPPHFWALSLF), 223–243 (ALFYAVLMAPVGVLPWVMGFA), 246–266 (FYGVVSTLLGLAFVYYAWRLW), and 292–312 (IFAVLLFEALTFKLLAAFGVF).

This sequence belongs to the UbiA prenyltransferase family. Protoheme IX farnesyltransferase subfamily.

Its subcellular location is the cell inner membrane. It catalyses the reaction heme b + (2E,6E)-farnesyl diphosphate + H2O = Fe(II)-heme o + diphosphate. The protein operates within porphyrin-containing compound metabolism; heme O biosynthesis; heme O from protoheme: step 1/1. Converts heme B (protoheme IX) to heme O by substitution of the vinyl group on carbon 2 of heme B porphyrin ring with a hydroxyethyl farnesyl side group. The polypeptide is Protoheme IX farnesyltransferase (Brucella melitensis biotype 1 (strain ATCC 23456 / CCUG 17765 / NCTC 10094 / 16M)).